A 1051-amino-acid polypeptide reads, in one-letter code: Transcription intermediary factor 1-alpha (1051 aa).

Residues 1 to 42 (MEVAVEKAAAAAAPAGGPAAAAPSGENEAESRQGPDSESGGE) form a disordered region. Residue lysine 7 forms a Glycyl lysine isopeptide (Lys-Gly) (interchain with G-Cter in SUMO2) linkage. The span at 8 to 23 (AAAAAAPAGGPAAAAP) shows a compositional bias: low complexity. The segment at 52-77 (CAVCHQNIQSRVPKLLPCLHSFCQRC) adopts an RING-type zinc-finger fold. The interval 94 to 115 (SAETPPPAPAPAPAPGSPAGGP) is disordered. Threonine 97 is subject to Phosphothreonine. Pro residues predominate over residues 97–109 (TPPPAPAPAPAPG). A Phosphoserine modification is found at serine 110. B box-type zinc fingers lie at residues 158-211 (KSNQ…VSPE) and 218-259 (QRPV…YQFI). The Zn(2+) site is built by cysteine 163, cysteine 166, cysteine 187, and histidine 200. Lysine 205 is covalently cross-linked (Glycyl lysine isopeptide (Lys-Gly) (interchain with G-Cter in SUMO2)). Zn(2+) contacts are provided by cysteine 223, histidine 226, cysteine 246, and histidine 251. Lysine 276 participates in a covalent cross-link: Glycyl lysine isopeptide (Lys-Gly) (interchain with G-Cter in SUMO2). The stretch at 289 to 359 (NQIQNRIIEI…AGLSKQLEHV (71 aa)) forms a coiled coil. Residues 429 to 457 (ESQPQMPKQNPVVEQSSQPPGGLPSNQLS) form a disordered region. Positions 431-457 (QPQMPKQNPVVEQSSQPPGGLPSNQLS) are enriched in polar residues. Glycyl lysine isopeptide (Lys-Gly) (interchain with G-Cter in SUMO2) cross-links involve residues lysine 436 and lysine 458. Arginine 469 is modified (omega-N-methylarginine). Low complexity-rich tracts occupy residues 479 to 490 (AQRQQVQRRPAP) and 501 to 510 (PIQQPSISHQ). Positions 479 to 551 (AQRQQVQRRP…PSQNVPRQTT (73 aa)) are disordered. Pro residues predominate over residues 526-535 (PNGPVLPPYP). Positions 538-551 (LRYSPSQNVPRQTT) are enriched in polar residues. Glycyl lysine isopeptide (Lys-Gly) (interchain with G-Cter in SUMO2) cross-links involve residues lysine 553 and lysine 642. Positions 644–713 (TGVDHAQPRP…PAGADSTHKV (70 aa)) are disordered. A phosphoserine mark is found at serine 655, serine 661, and serine 668. The segment covering 655 to 667 (SNRTVQSPNSSVP) has biased composition (polar residues). Over residues 686–708 (SPSASSVGSRGSSGSSSKPAGAD) the composition is skewed to low complexity. Glycyl lysine isopeptide (Lys-Gly) (interchain with G-Cter in SUMO2) cross-links involve residues lysine 703 and lysine 712. Glycyl lysine isopeptide (Lys-Gly) (interchain with G-Cter in SUMO); alternate cross-links involve residues lysine 724 and lysine 742. Lysine 724 participates in a covalent cross-link: Glycyl lysine isopeptide (Lys-Gly) (interchain with G-Cter in SUMO1); alternate. Glycyl lysine isopeptide (Lys-Gly) (interchain with G-Cter in SUMO2); alternate cross-links involve residues lysine 724 and lysine 742. A phosphoserine mark is found at serine 745 and serine 769. Positions 755–780 (NYPRSILTSLLLNSSQSSASEETVLR) are nuclear receptor binding site (NRBS). Positions 771–827 (SSASEETVLRSDAPDSTGDQPGLHQENSSNGKSEWSDASQKSPVHVGETRKEDDPNE) are disordered. Positions 795 to 812 (QENSSNGKSEWSDASQKS) are enriched in polar residues. A Glycyl lysine isopeptide (Lys-Gly) (interchain with G-Cter in SUMO2) cross-link involves residue lysine 802. Phosphoserine is present on serine 809. Residue lysine 811 forms a Glycyl lysine isopeptide (Lys-Gly) (interchain with G-Cter in SUMO2) linkage. Serine 812 carries the post-translational modification Phosphoserine. Threonine 819 bears the Phosphothreonine mark. The PHD-type zinc finger occupies 827–874 (EDWCAVCQNGGELLCCEKCPKVFHLTCHVPTLTNFPSGEWICTFCRDL). The segment at 835 to 841 (NGGELLC) is interaction with histone H3 that is not methylated at 'Lys-4' (H3K4me0). Residue lysine 876 forms a Glycyl lysine isopeptide (Lys-Gly) (interchain with G-Cter in SUMO2) linkage. Residues 892–908 (KRKSEGLTKLTPIDKRK) carry the Nuclear localization signal motif. Residues 900–1005 (KLTPIDKRKC…SYFEELLKNL (106 aa)) enclose the Bromo domain. Residues lysine 950 and lysine 993 each participate in a glycyl lysine isopeptide (Lys-Gly) (interchain with G-Cter in SUMO2) cross-link. Residues 1024-1051 (KFSDDSDDDFVQPRKKRLKSTEDRQLLK) are disordered. Phosphoserine occurs at positions 1026 and 1029. A Glycyl lysine isopeptide (Lys-Gly) (interchain with G-Cter in SUMO2) cross-link involves residue lysine 1042. The segment covering 1042–1051 (KSTEDRQLLK) has biased composition (basic and acidic residues). Serine 1043 is modified (phosphoserine).

In terms of assembly, interacts (via bromo domain) with histone H3 (via N-terminus), provided that it is not methylated at 'Lys-4' (H3K4me0). Does not interact with histone H3 that is methylated at 'Lys-4' (H3K4me1, H3K4me2 or H3K4me3). Interacts (via bromo domain) with histone H3 (via N-terminus) that is acetylated at 'Lys-23' (H3K23ac). Has the highest affinity for histone H3 that is both unmodified at 'Lys-4' (H3K4me0) and acetylated at 'Lys-23' (H3K23ac). Has very low affinity for histone H3 that is methylated at 'Lys-9' (H3K9me), or acetylated at both 'Lys-9' (H3K9ac) and 'Lys-14' (H3K14ac), or acetylated at 'Lys-27' (H3K27ac) (in vitro). Interacts with TRIM16. Interacts with NR3C2/MCR. Interacts with the ligand-binding domain of estrogen receptors (in vitro). Interaction with DNA-bound estrogen receptors requires the presence of estradiol. Interacts with AR, CARM1, KAT5/TIP60, NCOA2/GRIP1, BRD7, CBX1, CBX3 and CBX5. Part of a coactivator complex containing TRIM24, NCOA2/GRIP1 and CARM1. Interacts with p53/TP53 and PML. Post-translationally, sumoylated. Phosphorylated at Ser-768 by ATM kinase induces ubiquitination and degradation during DNA damage. In terms of processing, undergoes ubiquitination-mediated degradation in response to DNA damage. In terms of tissue distribution, detected in embryonic and adult liver. Detected in zygote and throughout embryogenesis (at protein level). Detected in all adult tissues, with the highest expression level in testis.

The protein resides in the nucleus. The protein localises to the cytoplasm. The catalysed reaction is S-ubiquitinyl-[E2 ubiquitin-conjugating enzyme]-L-cysteine + [acceptor protein]-L-lysine = [E2 ubiquitin-conjugating enzyme]-L-cysteine + N(6)-ubiquitinyl-[acceptor protein]-L-lysine.. It functions in the pathway protein modification; protein ubiquitination. In terms of biological role, transcriptional coactivator that interacts with numerous nuclear receptors and coactivators and modulates the transcription of target genes. Interacts with chromatin depending on histone H3 modifications, having the highest affinity for histone H3 that is both unmodified at 'Lys-4' (H3K4me0) and acetylated at 'Lys-23' (H3K23ac). Has E3 protein-ubiquitin ligase activity. Promotes ubiquitination and proteasomal degradation of p53/TP53. Plays a role in the regulation of cell proliferation and apoptosis via its effects on p53/TP53 levels. Up-regulates ligand-dependent transcription activation by AR, GCR/NR3C1, thyroid hormone receptor (TR) and ESR1. Modulates transcription activation by retinoic acid (RA) receptors, such as RARA. Plays a role in regulating retinoic acid-dependent proliferation of hepatocytes. Required for normal transition from proliferating neonatal hepatocytes to quiescent adult hepatocytes. Its function is as follows. Transcriptional coactivator that interacts with numerous nuclear receptors and coactivators and modulates the transcription of target genes. Interacts with chromatin depending on histone H3 modifications, having the highest affinity for histone H3 that is both unmodified at 'Lys-4' (H3K4me0) and acetylated at 'Lys-23' (H3K23ac). Has E3 protein-ubiquitin ligase activity. During the DNA damage response, participates in an autoregulatory feedback loop with TP53. Early in response to DNA damage, ATM kinase phosphorylates TRIM24 leading to its ubiquitination and degradation. After sufficient DNA repair has occurred, TP53 activates TRIM24 transcription, ultimately leading to TRIM24-mediated TP53 ubiquitination and degradation. Plays a role in the regulation of cell proliferation and apoptosis, at least in part via its effects on p53/TP53 levels. Up-regulates ligand-dependent transcription activation by AR, GCR/NR3C1, thyroid hormone receptor (TR) and ESR1. Modulates transcription activation by retinoic acid (RA) receptors, including RARA. Plays a role in regulating retinoic acid-dependent proliferation of hepatocytes. Also participates in innate immunity by mediating the specific 'Lys-63'-linked ubiquitination of TRAF3 leading to activation of downstream signal transduction of the type I IFN pathway. Additionally, negatively regulates NLRP3/CASP1/IL-1beta-mediated pyroptosis and cell migration probably by ubiquitinating NLRP3. The polypeptide is Transcription intermediary factor 1-alpha (Trim24) (Mus musculus (Mouse)).